Consider the following 398-residue polypeptide: Inner membrane protein YjgN (398 aa).

Over 1 to 24 the chain is Cytoplasmic; it reads MAQVINEMDVPSHSFVFHGTGERY. A helical transmembrane segment spans residues 25 to 45; it reads FLICVVNVLLTIITLGIYLPW. Residues 46-73 lie on the Periplasmic side of the membrane; the sequence is ALMKCKRYLYANMEVNGQRFSYGITGGN. A helical membrane pass occupies residues 74-94; the sequence is VFVSCLFFVFFYFAILMTVSA. Position 95 (aspartate 95) is a topological domain, cytoplasmic. Residues 96–116 traverse the membrane as a helical segment; sequence MPLVGCVLTLLLLVLLIFMAA. The Periplasmic portion of the chain corresponds to 117 to 142; the sequence is KGLRHQALMTSLNGVRFSFNCSMKGF. Residues 143-163 traverse the membrane as a helical segment; sequence WWVTFFLPILMAIGMGTVFFI. The Cytoplasmic segment spans residues 164–175; that stretch reads STKMLPANSSSS. Residues 176–196 traverse the membrane as a helical segment; it reads VIISMVLMAIVGIVSIGIFNG. Residues 197-228 lie on the Periplasmic side of the membrane; the sequence is TLYSLVMSFLWSNTSFGIHRFKVKLDTTYCIK. The chain crosses the membrane as a helical span at residues 229–249; sequence YAILAFLALLPFLAVAGYIIF. Residues 250 to 278 lie on the Cytoplasmic side of the membrane; the sequence is DQILNAYDSSVYANDDIENLQQFMEMQRK. A helical membrane pass occupies residues 279–299; the sequence is MIIAQLIYYFGIAVSTSYLTV. Residues 300–333 lie on the Periplasmic side of the membrane; it reads SLRNHFMSNLSLNDGRIRFRLTLTYHGMLYRMCA. The helical transmembrane segment at 334 to 354 threads the bilayer; sequence LVVISGITGGLAYPLLKIWMI. The Cytoplasmic portion of the chain corresponds to 355-398; the sequence is DWQAKNTYLLGDLDDLPLINKEEQPDKGFLASISRGVMPSLPFL.

Its subcellular location is the cell inner membrane. The sequence is that of Inner membrane protein YjgN (yjgN) from Escherichia coli (strain K12).